A 72-amino-acid polypeptide reads, in one-letter code: Threonine dehydratase operon activator protein (72 aa).

Its function is as follows. Probable trans-acting positive activator for the tdc operon. This chain is Threonine dehydratase operon activator protein (tdcR), found in Escherichia coli (strain K12).